We begin with the raw amino-acid sequence, 90 residues long: MNKSQLIDKIAAGADISKAAAGRALDAVIASVTDSLKAGDDVALVGFGSFTVRERSARTGRNPQTGKEIKIAARKVPAFRAGKALKDAVN.

The protein belongs to the bacterial histone-like protein family. Heterodimer of an alpha and a beta chain.

Functionally, histone-like DNA-binding protein which is capable of wrapping DNA to stabilize it, and thus to prevent its denaturation under extreme environmental conditions. The chain is DNA-binding protein HU-beta (hupB) from Serratia marcescens.